The primary structure comprises 569 residues: MDAGSSRSLENAVNKIYHDQLVPKINTSKKMSTLAHPPNILEMPQEIKKNCGGKQVEITLERIKMTKSIKEKQSNDLEKAAFKRKAEGEEKPTRKKEAKIIELDNQLITMPLPHIPLKNIMDVEMKLVYIDEVGVRYEFVESFMSTGSQPTCRVAEIVDPLSVPNFSFLPQIDKWLQVALKDASSCYRQKKYALAAGQFRTALELCSKGAVLEEPFDASAEDIASVASFIETKLVTCYLRMRKPDLALNHAHRSIVLNPAYFRNHLRQATVFRCLERYSEAARSAMIADYMFWLGGGREQSISKLIKLYWQAMIEEAITRAESFSVMYTPFATKIRADKIEKVKDVFTKTHPAYAEYIYTDLQTLHMLPQTVDWSSFPPQQYLLTLGFKNKEDGKFLEKISSRKLPIFTEHKTPFGLTREDTVRQMETMGKRILPILDFIRSTQLNGSFPASSGVMEKLQYAGLLSQLQRVKEQSQVINQAMAELATIPYLRDISQQEAELLQSLMADAMDTLEGRRNDNERVWNTIQKVGQIEDFLYQLEDSFLKTKKLRTARRQKTKMKRLQIVQQS.

The protein belongs to the SPATA16 family.

Its subcellular location is the golgi apparatus. The protein localises to the cytoplasmic vesicle. The protein resides in the secretory vesicle. It is found in the acrosome. In terms of biological role, essential for spermiogenesis and male fertility. Involved in the formation of sperm acrosome during spermatogenesis. This is Spermatogenesis-associated protein 16 (SPATA16) from Macaca fascicularis (Crab-eating macaque).